Here is an 86-residue protein sequence, read N- to C-terminus: Large ribosomal subunit protein eL20 (86 aa).

This sequence belongs to the eukaryotic ribosomal protein eL20 family. Part of the 50S ribosomal subunit. Binds 23S rRNA.

This Metallosphaera sedula (strain ATCC 51363 / DSM 5348 / JCM 9185 / NBRC 15509 / TH2) protein is Large ribosomal subunit protein eL20.